The chain runs to 508 residues: Photosystem II CP47 reaction center protein (508 aa).

6 helical membrane-spanning segments follow: residues 21 to 36 (SVHI…WAGS), 101 to 115 (IVFS…IWHW), 140 to 156 (GIHL…FGAF), 203 to 218 (IAAG…FHLS), 237 to 252 (VLSS…AFVV), and 457 to 472 (SFAL…HGAR).

It belongs to the PsbB/PsbC family. PsbB subfamily. As to quaternary structure, PSII is composed of 1 copy each of membrane proteins PsbA, PsbB, PsbC, PsbD, PsbE, PsbF, PsbH, PsbI, PsbJ, PsbK, PsbL, PsbM, PsbT, PsbX, PsbY, PsbZ, Psb30/Ycf12, at least 3 peripheral proteins of the oxygen-evolving complex and a large number of cofactors. It forms dimeric complexes. Requires Binds multiple chlorophylls. PSII binds additional chlorophylls, carotenoids and specific lipids. as cofactor.

It localises to the plastid. Its subcellular location is the chloroplast thylakoid membrane. In terms of biological role, one of the components of the core complex of photosystem II (PSII). It binds chlorophyll and helps catalyze the primary light-induced photochemical processes of PSII. PSII is a light-driven water:plastoquinone oxidoreductase, using light energy to abstract electrons from H(2)O, generating O(2) and a proton gradient subsequently used for ATP formation. The chain is Photosystem II CP47 reaction center protein from Vitis vinifera (Grape).